Reading from the N-terminus, the 294-residue chain is HTH-type transcriptional activator AmpR (294 aa).

Residues 6–63 (IPLNSLRAFEAAARQLSFTKAAIELNVTHAAISQQVKALEQRLNCRLFIRISRGLVLT) enclose the HTH lysR-type domain. A DNA-binding region (H-T-H motif) is located at residues 23-42 (FTKAAIELNVTHAAISQQVK).

The protein belongs to the LysR transcriptional regulatory family.

Its subcellular location is the cytoplasm. In terms of biological role, this protein is a positive regulator of gene expression of beta-lactamase (AmpC). The polypeptide is HTH-type transcriptional activator AmpR (ampR) (Yersinia enterocolitica).